Reading from the N-terminus, the 65-residue chain is MTADISAAPVAPQMRPLGPLIPASELNIWHSAGDALAAAKRHQQRVRTWARAAYQRERARATPRG.

This is an uncharacterized protein from Rhizobium fredii (Sinorhizobium fredii).